A 204-amino-acid polypeptide reads, in one-letter code: MTKYTFKPKDFKAFNVEGLDARMEAVNEYIRPQLHELGEYFSDFFTSQTGETFYPHVAKHARRSVNPPKDTWVAFATSKRGYKMLPHFQIGMFEDQLFVMFGIMHEAKDKATRAKVFERKFKAIQQLPDDYRVCLDHMKPDKPFIKDLTDDDLKEAIQRAINVKKGEFFIARAITPQDKRLKSDKAFIAFLEETFDQFLPFYSA.

Belongs to the UPF0637 family.

This Staphylococcus aureus (strain MRSA252) protein is UPF0637 protein SAR1080.